Reading from the N-terminus, the 163-residue chain is Large ribosomal subunit protein uL15 (163 aa).

The interval 1-43 is disordered; the sequence is MKLNEIADNEGSRKKRTRVGRGIGSGKGKQSGRGGKGQTARSG. Gly residues predominate over residues 21 to 37; it reads RGIGSGKGKQSGRGGKG.

The protein belongs to the universal ribosomal protein uL15 family. Part of the 50S ribosomal subunit.

In terms of biological role, binds to the 23S rRNA. The polypeptide is Large ribosomal subunit protein uL15 (Afipia carboxidovorans (strain ATCC 49405 / DSM 1227 / KCTC 32145 / OM5) (Oligotropha carboxidovorans)).